The primary structure comprises 226 residues: Enolase-phosphatase E1 (226 aa).

Belongs to the HAD-like hydrolase superfamily. MasA/MtnC family. In terms of assembly, monomer. Requires Mg(2+) as cofactor.

The enzyme catalyses 5-methylsulfanyl-2,3-dioxopentyl phosphate + H2O = 1,2-dihydroxy-5-(methylsulfanyl)pent-1-en-3-one + phosphate. It participates in amino-acid biosynthesis; L-methionine biosynthesis via salvage pathway; L-methionine from S-methyl-5-thio-alpha-D-ribose 1-phosphate: step 3/6. It functions in the pathway amino-acid biosynthesis; L-methionine biosynthesis via salvage pathway; L-methionine from S-methyl-5-thio-alpha-D-ribose 1-phosphate: step 4/6. Functionally, bifunctional enzyme that catalyzes the enolization of 2,3-diketo-5-methylthiopentyl-1-phosphate (DK-MTP-1-P) into the intermediate 2-hydroxy-3-keto-5-methylthiopentenyl-1-phosphate (HK-MTPenyl-1-P), which is then dephosphorylated to form the acireductone 1,2-dihydroxy-3-keto-5-methylthiopentene (DHK-MTPene). This is Enolase-phosphatase E1 from Shewanella sp. (strain ANA-3).